Here is a 3625-residue protein sequence, read N- to C-terminus: Spectinabilin polyketide synthase system protein NorA' (3625 aa).

Residues 33 to 459 (REPVAVVSMA…GTNAHVILEQ (427 aa)) enclose the Ketosynthase family 3 (KS3) 1 domain. Catalysis depends on for beta-ketoacyl synthase 1 activity residues Cys-206, His-341, and His-381. The Malonyl-CoA:ACP transacylase (MAT) 1 domain occupies 564–881 (LVFPGQGSQW…SLGELFAGGR (318 aa)). The tract at residues 930 to 1054 (HPWWGAVTEL…GTLTRTARPA (125 aa)) is N-terminal hotdog fold 1. Positions 930–1200 (HPWWGAVTEL…VRPLTPGSGA (271 aa)) constitute a PKS/mFAS DH 1 domain. The active-site Proton acceptor; for dehydratase activity 1 is the His-962. Residues 1066–1200 (ADPLPVDRIY…VRPLTPGSGA (135 aa)) are C-terminal hotdog fold 1. Asp-1125 functions as the Proton donor; for dehydratase activity 1 in the catalytic mechanism. Residues 1443–1620 (GTVLVTGAAG…LSLAWGLWAE (178 aa)) enclose the Ketoreductase (KR) 1 domain. Residues 1722–1797 (GAVLETVRAQ…SLAAHLLGRL (76 aa)) form the Carrier 1 domain. Residue Ser-1757 is modified to O-(pantetheine 4'-phosphoryl)serine. A Ketosynthase family 3 (KS3) 2 domain is found at 1815–2231 (DEPIAIIGMA…GTNAHVVLEQ (417 aa)). Active-site for beta-ketoacyl synthase 2 activity residues include Cys-1978, His-2113, and His-2153. One can recognise a Malonyl-CoA:ACP transacylase (MAT) 2 domain in the interval 2336–2656 (VFVFPGQGAQ…VAEAHTRGIA (321 aa)). Positions 2704–2829 (HPLLGARMEL…GLLSEEEPAT (126 aa)) are N-terminal hotdog fold 2. The PKS/mFAS DH 2 domain maps to 2704–2981 (HPLLGARMEL…ARPVPAGQLR (278 aa)). His-2736 (proton acceptor; for dehydratase activity 2) is an active-site residue. Positions 2842–2981 (AEPIELVGFY…ARPVPAGQLR (140 aa)) are C-terminal hotdog fold 2. Residue Asp-2903 is the Proton donor; for dehydratase activity 2 of the active site. Residues 3182-3361 (GTVLITGASG…QSLAWGLWSE (180 aa)) enclose the Ketoreductase (KR) 2 domain. In terms of domain architecture, Carrier 2 spans 3462 to 3537 (RQLTDLVRAQ…ALAGHLSTRL (76 aa)). The residue at position 3497 (Ser-3497) is an O-(pantetheine 4'-phosphoryl)serine.

As to quaternary structure, the spectinabilin polyketide synthase complex is composed of 4 proteins, NorA, NorA', NorB and NorC. The complex comprises 6 modules with a total of 28 catalytic domains catalyzing 7 chain elongations. NorA comprises one module, NorA' two modules, NorB one module and NorC two modules. It depends on pantetheine 4'-phosphate as a cofactor.

It catalyses the reaction 4-nitrobenzoyl-CoA + 6 (S)-methylmalonyl-CoA + malonyl-CoA + 6 NADPH + 12 H(+) = demethyldeoxyspectinabilin + 7 CO2 + 6 NADP(+) + 8 CoA + 5 H2O. Its pathway is antibiotic biosynthesis. It participates in polyketide biosynthesis. In terms of biological role, component of a type I modular polyketide synthase (PKS) that generates the backbone of the antibiotic spectinabilin (also known as neoaureothin), a nitroaryl-substituted polyketide metabolite. This PKS system accepts the unusual starter unit 4-nitrobenzoyl-CoA and extends it by 6 molecules of (S)-methylmalonyl-CoA and a single molecule of malonyl-CoA. This chain is Spectinabilin polyketide synthase system protein NorA', found in Streptomyces orinoci (Streptoverticillium orinoci).